The chain runs to 107 residues: Universal stress protein B homolog (107 aa).

2 consecutive transmembrane segments (helical) span residues 6 to 26 (TILF…LTAL) and 86 to 106 (VREL…AAFI).

The protein belongs to the universal stress protein B family.

It localises to the cell inner membrane. The polypeptide is Universal stress protein B homolog (Vibrio parahaemolyticus serotype O3:K6 (strain RIMD 2210633)).